We begin with the raw amino-acid sequence, 245 residues long: Ribonuclease 3 (245 aa).

In terms of domain architecture, RNase III spans 18-146 (LSKFLENLSI…FVGAIYLDSG (129 aa)). Residue E59 coordinates Mg(2+). Residue D63 is part of the active site. Residues D132 and E135 each contribute to the Mg(2+) site. The active site involves E135. In terms of domain architecture, DRBM spans 173-242 (DYKSLLQEYV…AEVALKAMEN (70 aa)).

It belongs to the ribonuclease III family. Homodimer. It depends on Mg(2+) as a cofactor.

It localises to the cytoplasm. The catalysed reaction is Endonucleolytic cleavage to 5'-phosphomonoester.. Functionally, digests double-stranded RNA. Involved in the processing of primary rRNA transcript to yield the immediate precursors to the large and small rRNAs (23S and 16S). Processes some mRNAs, and tRNAs when they are encoded in the rRNA operon. Processes pre-crRNA and tracrRNA of type II CRISPR loci if present in the organism. The chain is Ribonuclease 3 from Borreliella burgdorferi (strain ATCC 35210 / DSM 4680 / CIP 102532 / B31) (Borrelia burgdorferi).